A 258-amino-acid polypeptide reads, in one-letter code: 5'-nucleotidase SurE (258 aa).

A divalent metal cation is bound by residues Asp-9, Asp-10, Ser-42, and Asn-96.

Belongs to the SurE nucleotidase family. A divalent metal cation serves as cofactor.

The protein localises to the cytoplasm. The enzyme catalyses a ribonucleoside 5'-phosphate + H2O = a ribonucleoside + phosphate. Functionally, nucleotidase that shows phosphatase activity on nucleoside 5'-monophosphates. The polypeptide is 5'-nucleotidase SurE (Campylobacter jejuni subsp. jejuni serotype O:23/36 (strain 81-176)).